The primary structure comprises 612 residues: Dihydroxy-acid dehydratase (612 aa).

Asp-81 is a binding site for Mg(2+). A [2Fe-2S] cluster-binding site is contributed by Cys-122. Mg(2+) contacts are provided by Asp-123 and Lys-124. Position 124 is an N6-carboxylysine (Lys-124). Residue Cys-195 participates in [2Fe-2S] cluster binding. Glu-491 is a binding site for Mg(2+). Residue Ser-517 is the Proton acceptor of the active site.

Belongs to the IlvD/Edd family. As to quaternary structure, homodimer. It depends on [2Fe-2S] cluster as a cofactor. Mg(2+) is required as a cofactor.

The enzyme catalyses (2R)-2,3-dihydroxy-3-methylbutanoate = 3-methyl-2-oxobutanoate + H2O. It carries out the reaction (2R,3R)-2,3-dihydroxy-3-methylpentanoate = (S)-3-methyl-2-oxopentanoate + H2O. The protein operates within amino-acid biosynthesis; L-isoleucine biosynthesis; L-isoleucine from 2-oxobutanoate: step 3/4. It functions in the pathway amino-acid biosynthesis; L-valine biosynthesis; L-valine from pyruvate: step 3/4. In terms of biological role, functions in the biosynthesis of branched-chain amino acids. Catalyzes the dehydration of (2R,3R)-2,3-dihydroxy-3-methylpentanoate (2,3-dihydroxy-3-methylvalerate) into 2-oxo-3-methylpentanoate (2-oxo-3-methylvalerate) and of (2R)-2,3-dihydroxy-3-methylbutanoate (2,3-dihydroxyisovalerate) into 2-oxo-3-methylbutanoate (2-oxoisovalerate), the penultimate precursor to L-isoleucine and L-valine, respectively. In Haemophilus influenzae (strain PittGG), this protein is Dihydroxy-acid dehydratase.